A 154-amino-acid polypeptide reads, in one-letter code: Large ribosomal subunit protein uL16 (154 aa).

Belongs to the universal ribosomal protein uL16 family. Part of the 50S ribosomal subunit.

Binds 23S rRNA and is also seen to make contacts with the A and possibly P site tRNAs. The protein is Large ribosomal subunit protein uL16 of Synechococcus sp. (strain RCC307).